Consider the following 156-residue polypeptide: Small ribosomal subunit protein uS7 (156 aa).

This sequence belongs to the universal ribosomal protein uS7 family. Part of the 30S ribosomal subunit. Contacts proteins S9 and S11.

Functionally, one of the primary rRNA binding proteins, it binds directly to 16S rRNA where it nucleates assembly of the head domain of the 30S subunit. Is located at the subunit interface close to the decoding center, probably blocks exit of the E-site tRNA. This Aster yellows witches'-broom phytoplasma (strain AYWB) protein is Small ribosomal subunit protein uS7.